We begin with the raw amino-acid sequence, 1683 residues long: E3 ubiquitin-protein ligase SHPRH (1683 aa).

The tract at residues 1–43 (MSSRRKRAPPVRVDEEKRQQLHWNMHEDRRNEPIIISDDDEQP) is disordered. Residues 12 to 32 (RVDEEKRQQLHWNMHEDRRNE) show a composition bias toward basic and acidic residues. The residue at position 266 (S266) is a Phosphoserine. The 83-residue stretch at 307–389 (YQREAVNWML…TVEVLALILT (83 aa)) folds into the Helicase ATP-binding; first part domain. Position 373–380 (373–380 (DEMGLGKT)) interacts with ATP. The H15 domain maps to 438–512 (QCPPTRVMIL…GFSGTFTLGK (75 aa)). Residues 525–607 (KQAVGSPRKI…QGHCPATSDS (83 aa)) are disordered. Positions 534–547 (IQKETRKSGNKDTD) are enriched in basic and acidic residues. Residues 568–588 (KSRRNRSKLRKKLVPSTKKGK) are compositionally biased toward basic residues. Phosphoserine is present on S635. The segment at 658-709 (RFECICGELDQIDRKPRVQCLKCHLWQHAKCVNYDEKNLKIKPFYCPHCLVA) adopts a PHD-type zinc-finger fold. A Helicase ATP-binding; second part domain is found at 710 to 868 (MEPVSTRATL…FGLVVFLGIE (159 aa)). A DEAQ box motif is present at residues 819-822 (DEAQ). The RING-type zinc-finger motif lies at 1432–1479 (CPICARQLGKQWAVLTCGHCFCNECISIIIEQYSVGSHRSSIKCAICR). One can recognise a Helicase C-terminal domain in the interval 1514–1672 (AVVRTLMKIQ…ASVLTVADLA (159 aa)).

The protein belongs to the SNF2/RAD54 helicase family. Homodimer. Interacts with HLTF, PCNA, UBE2N and RAD18. As to expression, broadly expressed.

It catalyses the reaction S-ubiquitinyl-[E2 ubiquitin-conjugating enzyme]-L-cysteine + [acceptor protein]-L-lysine = [E2 ubiquitin-conjugating enzyme]-L-cysteine + N(6)-ubiquitinyl-[acceptor protein]-L-lysine.. It functions in the pathway protein modification; protein ubiquitination. E3 ubiquitin-protein ligase involved in DNA repair. Upon genotoxic stress, accepts ubiquitin from the UBE2N-UBE2V2 E2 complex and transfers it to 'Lys-164' of PCNA which had been monoubiquitinated by UBE2A/B-RAD18, promoting the formation of non-canonical poly-ubiquitin chains linked through 'Lys-63'. The sequence is that of E3 ubiquitin-protein ligase SHPRH (SHPRH) from Homo sapiens (Human).